The sequence spans 468 residues: Tripartite motif-containing protein 75 (468 aa).

The RING-type zinc-finger motif lies at 16-57 (CSICLDYLSDPVTIECGHNFCRSCIQQSWLDLQELFPCPVCR). The B box-type zinc finger occupies 92 to 133 (EETTLCEKHNQPLSVFCKEDLMVLCPLCTQPPDHQGHHVRPI). Zn(2+) is bound by residues Cys-97, His-100, Cys-119, and His-125. The stretch at 170–222 (LELREMVENQRQELSSEFEHLNQFLDREQQAVLSRLAEEEKDNQQKLSANITA) forms a coiled coil. A B30.2/SPRY domain is found at 276 to 468 (CSFPPQYSAL…LRICTGTVCE (193 aa)).

The protein belongs to the TRIM/RBCC family.

It is found in the cytoplasm. Its subcellular location is the cytoskeleton. It localises to the spindle. May play a role in female meiosis. The protein is Tripartite motif-containing protein 75 of Homo sapiens (Human).